A 797-amino-acid chain; its full sequence is RAS guanyl-releasing protein 1 (797 aa).

Basic and acidic residues predominate over residues 1-12 (MGTLGKAREAPR). Residues 1-23 (MGTLGKAREAPRKPSHGCRAASK) are disordered. One can recognise an N-terminal Ras-GEF domain in the interval 53–176 (LGHLAKGASL…RLIDTTQINA (124 aa)). The interval 57-110 (AKGASLDDLIDSCIQSFDADGNLCRSNQLLQVMLTMHRIVISSAELLQKVITLY) is ras exchanger motif region; required for transforming activity. T184 is modified (phosphothreonine; by PKC). Positions 205–436 (EPEELSEHLT…YELSYAREPR (232 aa)) constitute a Ras-GEF domain. 2 consecutive EF-hand domains span residues 470-505 (HVQR…FPFS) and 506-532 (FCVM…ASSI). Residues D483, D485, D487, Y489, and E494 each contribute to the Ca(2+) site. A Phorbol-ester/DAG-type zinc finger spans residues 541-591 (PHNFQETTYLKPTFCDNCAGFLWGVIKQGYRCKDCGMNCHKQCKDLVVFEC). The tract at residues 673-694 (TQTESQPWIGSEGPSGPFVLSS) is disordered. Residues 686-694 (PSGPFVLSS) are suppress the PT region-mediated translocation to plasma membrane. The tract at residues 718–797 (LVRKRAFVKW…LAQMEQGDCS (80 aa)) is PT region; mediates the BCR-dependent translocation to plasma membrane. Residues 746–786 (PTYQELEQEINTLKADNDALKIQLKYAQKKIESLQLEKSNH) are a coiled coil.

Belongs to the RASGRP family. Homodimer. Forms a signaling complex with DGKZ and HRAS. Interacts with F-actin. Interacts with SKAP1. In terms of tissue distribution, expressed in brain with higher expression in cerebellum, cerebral cortex and amygdala. Expressed in the hematopoietic system. Expressed in T-cells (at protein level). Expressed in NK cells (at protein level).

It localises to the cytoplasm. It is found in the cytosol. Its subcellular location is the cell membrane. The protein resides in the golgi apparatus membrane. The protein localises to the endoplasmic reticulum membrane. Autoinhibited. Activated by diacylglycerol and calcium binding, which induces a conformational change releasing the autoinhibitory state. Regulated by DGKA. Regulated by DGKZ. Regulated by PLC gamma and F-actin polymerization. Its function is as follows. Functions as a calcium- and diacylglycerol (DAG)-regulated nucleotide exchange factor specifically activating Ras through the exchange of bound GDP for GTP. Activates the Erk/MAP kinase cascade. Regulates T-cell/B-cell development, homeostasis and differentiation by coupling T-lymphocyte/B-lymphocyte antigen receptors to Ras. Regulates NK cell cytotoxicity and ITAM-dependent cytokine production by activation of Ras-mediated ERK and JNK pathways. Functions in mast cell degranulation and cytokine secretion, regulating FcERI-evoked allergic responses. May also function in differentiation of other cell types. This chain is RAS guanyl-releasing protein 1 (RASGRP1), found in Homo sapiens (Human).